The chain runs to 463 residues: Elongation factor 1-alpha (463 aa).

The tr-type G domain maps to 8 to 245 (KTHLNIVIIG…DALVPPVRPA (238 aa)). Positions 17 to 24 (GHVDSGKS) are G1. 17-24 (GHVDSGKS) is a binding site for GTP. The G2 stretch occupies residues 73 to 77 (GITID). Residues 94 to 97 (DAPG) are G3. GTP is bound by residues 94–98 (DAPGH) and 156–159 (NKMD). The tract at residues 156 to 159 (NKMD) is G4. The G5 stretch occupies residues 197–199 (SGW).

The protein belongs to the TRAFAC class translation factor GTPase superfamily. Classic translation factor GTPase family. EF-Tu/EF-1A subfamily. In terms of assembly, the 42S RNP particle comprises four subunits each of which contains one molecule of 5S RNA, three molecules of tRNA, two molecules of EF1-alpha and one molecule of the 5S RNA binding protein 43.

The protein resides in the cytoplasm. This protein is one of two protein components of a 42S RNP particle that is very abundant in previtellogenic oocytes. A major function served by 42sp50 appears to be the storage of tRNAs for later use in oogenesis and early embryogenesis. Purified 42S particles can directly transfer aminoacyl tRNA to ribosomes. The chain is Elongation factor 1-alpha from Xenopus laevis (African clawed frog).